A 453-amino-acid chain; its full sequence is Alpha-galacturonidase (453 aa).

11-72 (IKIAYIGGGS…SQWEYKSVDS (62 aa)) serves as a coordination point for NAD(+). Asparagine 151 is a substrate binding site. Cysteine 173 is a binding site for Mn(2+). Histidine 174 (proton donor) is an active-site residue. Histidine 209 is a binding site for Mn(2+).

The protein belongs to the glycosyl hydrolase 4 family. In terms of assembly, homotetramer. It depends on NAD(+) as a cofactor. Mn(2+) serves as cofactor.

The enzyme catalyses [(1-&gt;4)-alpha-D-galacturonosyl](n) + H2O = alpha-D-galacturonate + [(1-&gt;4)-alpha-D-galacturonosyl](n-1). In terms of biological role, alpha-galacturonidase able to catalyze the hydrolysis of the chromogenic substrate p-nitrophenyl-alpha-D-galacturonic acid (pNPalphaGalUA). It is probable that alpha-1,4-di-galacturonate (GalUA(2)) is the naturally occurring substrate. The sequence is that of Alpha-galacturonidase from Thermoanaerobacter italicus (strain DSM 9252 / Ab9).